The chain runs to 225 residues: Cytochrome c oxidase subunit 2 (225 aa).

Residues 1-26 (MMTWSQMSFSDMNSPIMEQMVFFHDH) lie on the Mitochondrial intermembrane side of the membrane. A helical membrane pass occupies residues 27–48 (SMMIILMITILTIYMITNIMMN). Residues 49–62 (NLLSRSMMEGQEIE) lie on the Mitochondrial matrix side of the membrane. The helical transmembrane segment at 63–82 (IIWTIIPAITLIFIAIPSLH) threads the bilayer. The Mitochondrial intermembrane segment spans residues 83–225 (LLYLTDETFN…KNFINFINSS (143 aa)). 6 residues coordinate Cu cation: His-160, Cys-195, Glu-197, Cys-199, His-203, and Met-206. Glu-197 serves as a coordination point for Mg(2+).

The protein belongs to the cytochrome c oxidase subunit 2 family. Component of the cytochrome c oxidase (complex IV, CIV), a multisubunit enzyme composed of a catalytic core of 3 subunits and several supernumerary subunits. The complex exists as a monomer or a dimer and forms supercomplexes (SCs) in the inner mitochondrial membrane with ubiquinol-cytochrome c oxidoreductase (cytochrome b-c1 complex, complex III, CIII). It depends on Cu cation as a cofactor.

The protein localises to the mitochondrion inner membrane. The enzyme catalyses 4 Fe(II)-[cytochrome c] + O2 + 8 H(+)(in) = 4 Fe(III)-[cytochrome c] + 2 H2O + 4 H(+)(out). Its function is as follows. Component of the cytochrome c oxidase, the last enzyme in the mitochondrial electron transport chain which drives oxidative phosphorylation. The respiratory chain contains 3 multisubunit complexes succinate dehydrogenase (complex II, CII), ubiquinol-cytochrome c oxidoreductase (cytochrome b-c1 complex, complex III, CIII) and cytochrome c oxidase (complex IV, CIV), that cooperate to transfer electrons derived from NADH and succinate to molecular oxygen, creating an electrochemical gradient over the inner membrane that drives transmembrane transport and the ATP synthase. Cytochrome c oxidase is the component of the respiratory chain that catalyzes the reduction of oxygen to water. Electrons originating from reduced cytochrome c in the intermembrane space (IMS) are transferred via the dinuclear copper A center (CU(A)) of subunit 2 and heme A of subunit 1 to the active site in subunit 1, a binuclear center (BNC) formed by heme A3 and copper B (CU(B)). The BNC reduces molecular oxygen to 2 water molecules using 4 electrons from cytochrome c in the IMS and 4 protons from the mitochondrial matrix. The sequence is that of Cytochrome c oxidase subunit 2 (COII) from Rhipicephalus sanguineus (Brown dog tick).